A 423-amino-acid chain; its full sequence is Flotillin-1 (423 aa).

Belongs to the band 7/mec-2 family. Flotillin subfamily. In terms of assembly, heterooligomeric complex of flotillin-1 and flotillin-2 and caveolin-1 and caveolin-2. In terms of tissue distribution, normally expressed in growing retinal exons of newly differentiated ganglion cells at the retinal margin. After optic nerve injury, expressed in all retinal ganglion cells and retinal axons. Also expressed in endothelial cells, spinal cord, larval and adult skin, muscle processes, thymus and gill macrophages.

It is found in the cell membrane. Its subcellular location is the endosome. The protein resides in the membrane. It localises to the caveola. The protein localises to the melanosome. It is found in the membrane raft. In terms of biological role, may act as a scaffolding protein within caveolar membranes, functionally participating in formation of caveolae or caveolae-like vesicles. This is Flotillin-1 (flot1) from Carassius auratus (Goldfish).